Reading from the N-terminus, the 250-residue chain is AA9 family lytic polysaccharide monooxygenase F (250 aa).

The signal sequence occupies residues Met1–Gly21. His22 is a binding site for Cu(2+). Residue Asp51 coordinates O2. Disulfide bonds link Cys77/Cys200 and Cys121/Cys125. His107 serves as a coordination point for Cu(2+). The O2 site is built by His186 and Gln195. Residue Tyr197 participates in Cu(2+) binding.

The protein belongs to the glycosyl hydrolase 61 family. Requires Cu(2+) as cofactor.

The protein resides in the secreted. The catalysed reaction is Endohydrolysis of (1-&gt;4)-beta-D-glucosidic linkages in cellulose, lichenin and cereal beta-D-glucans.. Functionally, lytic polysaccharide monooxygenase (LMPO) that depolymerizes crystalline and amorphous polysaccharides via the oxidation of scissile alpha- or beta-(1-4)-glycosidic bonds, yielding C1 or C4 oxidation products. Catalysis by LPMOs requires the reduction of the active-site copper from Cu(II) to Cu(I) by a reducing agent and H(2)O(2) or O(2) as a cosubstrate. Major secreted component of the extracellular cellulolytic system. This chain is AA9 family lytic polysaccharide monooxygenase F, found in Emericella nidulans (strain FGSC A4 / ATCC 38163 / CBS 112.46 / NRRL 194 / M139) (Aspergillus nidulans).